We begin with the raw amino-acid sequence, 350 residues long: Twinfilin-1 (350 aa).

At serine 2 the chain carries N-acetylserine. Residues 2-139 (SHQTGIQASE…SLHGYKKYLL (138 aa)) enclose the ADF-H 1 domain. A phosphoserine mark is found at serine 143 and serine 277. In terms of domain architecture, ADF-H 2 spans 177–313 (GVAFPISQEA…TADFLYEEVH (137 aa)). Residue tyrosine 309 is modified to Phosphotyrosine. The tract at residues 316-350 (QHAHKQSFAKPKGPSGKRGIRRIIRGPAETEATTE) is disordered. Threonine 349 is modified (phosphothreonine).

The protein belongs to the actin-binding proteins ADF family. Twinfilin subfamily. In terms of assembly, interacts with G-actin; ADP-actin form and capping protein (CP). May also be able to interact with TWF2 and phosphoinositides, PI(4,5)P2. When bound to PI(4,5)P2, it is down-regulated. Interacts with ACTG1. Post-translationally, phosphorylated on serine and threonine residues.

It is found in the cytoplasm. The protein localises to the cytoskeleton. Functionally, actin-binding protein involved in motile and morphological processes. Inhibits actin polymerization, likely by sequestering G-actin. By capping the barbed ends of filaments, it also regulates motility. Seems to play an important role in clathrin-mediated endocytosis and distribution of endocytic organelles. The sequence is that of Twinfilin-1 (TWF1) from Bos taurus (Bovine).